Here is a 152-residue protein sequence, read N- to C-terminus: Ribosome maturation factor RimP (152 aa).

This sequence belongs to the RimP family.

It localises to the cytoplasm. Required for maturation of 30S ribosomal subunits. This Burkholderia multivorans (strain ATCC 17616 / 249) protein is Ribosome maturation factor RimP.